We begin with the raw amino-acid sequence, 36 residues long: Photosystem I reaction center subunit VIII (36 aa).

The helical transmembrane segment at 8–28 threads the bilayer; sequence SILVPLVGLVFPAIAMASLFL.

This sequence belongs to the PsaI family.

The protein resides in the plastid. Its subcellular location is the chloroplast thylakoid membrane. Functionally, may help in the organization of the PsaL subunit. This is Photosystem I reaction center subunit VIII from Vitis vinifera (Grape).